The chain runs to 219 residues: Small ribosomal subunit protein uS5 (219 aa).

The disordered stretch occupies residues 1–32 (MSHPQSRPGGRDGRPRRRREPREEAPWVPKTA). Residues 68–131 (LKTEVVDVGI…NQALLNVGPI (64 aa)) form the S5 DRBM domain.

It belongs to the universal ribosomal protein uS5 family. In terms of assembly, part of the 30S ribosomal subunit. Contacts protein S4.

Functionally, with S4 and S12 plays an important role in translational accuracy. The chain is Small ribosomal subunit protein uS5 (rps5) from Cenarchaeum symbiosum (strain A).